Here is a 298-residue protein sequence, read N- to C-terminus: Distal tail protein (298 aa).

The protein belongs to the skunalikevirus distal tail protein family. Homohexamer. Interacts with the receptor binding protein.

It is found in the virion. Forms the distal part of the tail. Self-associates as two rings organized back to back, with a central channel allowing DNA ejection. The chain is Distal tail protein from Lactococcus phage SK1 (Lactococcus lactis bacteriophage SK1).